The chain runs to 102 residues: Small ribosomal subunit protein uS10 (102 aa).

It belongs to the universal ribosomal protein uS10 family. In terms of assembly, part of the 30S ribosomal subunit.

Its function is as follows. Involved in the binding of tRNA to the ribosomes. The protein is Small ribosomal subunit protein uS10 of Pelotomaculum thermopropionicum (strain DSM 13744 / JCM 10971 / SI).